The sequence spans 510 residues: MKKNLHIIILALSIFINLLFIYIFISEVKPNLNLNLSFILTAAVIVVTYLLFKNKFSELMPVNYNNITETKEDTSHRKTNITFKDVAGLDEVIDELKVIIDFMTNTEKYNKMGAKIPKGILFYGPPGTGKTLLATALAGETNSTFISASGSEFVEKYVGVGASRIRALFAKAKKSAPSIIFIDEIDAVGTKRNTDNNSEKDQTLNQLLVEMDGFNSNEGIIVIGATNRIDMLDEALLRPGRFDRTIHIGAPNMKARLEILKVHTRNKPLDESVSLSELARKTHGMTGAHLAAMCNEAAILAVMKNKSKIGKEEFEEALERVIAGLKKKNPSVLEKERNIAAYHEAGHALIGKILNVNTIEKISIVPRGEALGYVLNFPKEDAFLLTKTELKNKITMLLGGRASEEIIFNEISTGAENDLKEATKIAYQMVCNYGMSELGNRVFDLHMLKSTEIVDKEIDKIINSCYILAKKILLENKHKVIAIAEKLLEKESITKEELETLWEEENTLCV.

Residues Met-1–Asn-4 are Cytoplasmic-facing. A helical transmembrane segment spans residues Leu-5–Ile-25. The Extracellular segment spans residues Ser-26 to Asn-31. Residues Leu-32–Phe-52 form a helical membrane-spanning segment. Topologically, residues Lys-53 to Val-510 are cytoplasmic. ATP is bound at residue Gly-124–Thr-131. His-343 provides a ligand contact to Zn(2+). Glu-344 is an active-site residue. Residues His-347 and Asp-418 each contribute to the Zn(2+) site.

In the central section; belongs to the AAA ATPase family. It in the C-terminal section; belongs to the peptidase M41 family. As to quaternary structure, homohexamer. Requires Zn(2+) as cofactor.

It localises to the cell membrane. Its function is as follows. Acts as a processive, ATP-dependent zinc metallopeptidase for both cytoplasmic and membrane proteins. Plays a role in the quality control of integral membrane proteins. The chain is ATP-dependent zinc metalloprotease FtsH 2 from Thermoanaerobacter sp. (strain X514).